A 427-amino-acid polypeptide reads, in one-letter code: Glutamate-1-semialdehyde 2,1-aminomutase (427 aa).

Lysine 265 is modified (N6-(pyridoxal phosphate)lysine).

The protein belongs to the class-III pyridoxal-phosphate-dependent aminotransferase family. HemL subfamily. As to quaternary structure, homodimer. Pyridoxal 5'-phosphate is required as a cofactor.

Its subcellular location is the cytoplasm. The catalysed reaction is (S)-4-amino-5-oxopentanoate = 5-aminolevulinate. Its pathway is porphyrin-containing compound metabolism; protoporphyrin-IX biosynthesis; 5-aminolevulinate from L-glutamyl-tRNA(Glu): step 2/2. The sequence is that of Glutamate-1-semialdehyde 2,1-aminomutase from Bordetella avium (strain 197N).